The sequence spans 259 residues: 5'-nucleotidase SurE (259 aa).

A divalent metal cation-binding residues include Asp8, Asp9, Ser39, and Asn96.

It belongs to the SurE nucleotidase family. A divalent metal cation is required as a cofactor.

It localises to the cytoplasm. It carries out the reaction a ribonucleoside 5'-phosphate + H2O = a ribonucleoside + phosphate. In terms of biological role, nucleotidase that shows phosphatase activity on nucleoside 5'-monophosphates. The polypeptide is 5'-nucleotidase SurE (Pelotomaculum thermopropionicum (strain DSM 13744 / JCM 10971 / SI)).